The sequence spans 340 residues: tRNA N6-adenosine threonylcarbamoyltransferase (340 aa).

H113 and H117 together coordinate Fe cation. Substrate contacts are provided by residues 135-139, D169, G182, D186, and N274; that span reads LVSGG. Residue D302 coordinates Fe cation.

The protein belongs to the KAE1 / TsaD family. The cofactor is Fe(2+).

It is found in the cytoplasm. It catalyses the reaction L-threonylcarbamoyladenylate + adenosine(37) in tRNA = N(6)-L-threonylcarbamoyladenosine(37) in tRNA + AMP + H(+). Functionally, required for the formation of a threonylcarbamoyl group on adenosine at position 37 (t(6)A37) in tRNAs that read codons beginning with adenine. Is involved in the transfer of the threonylcarbamoyl moiety of threonylcarbamoyl-AMP (TC-AMP) to the N6 group of A37, together with TsaE and TsaB. TsaD likely plays a direct catalytic role in this reaction. The sequence is that of tRNA N6-adenosine threonylcarbamoyltransferase from Mycolicibacterium gilvum (strain PYR-GCK) (Mycobacterium gilvum (strain PYR-GCK)).